Consider the following 203-residue polypeptide: Large ribosomal subunit protein uL13 (203 aa).

The residue at position 2 (Ala-2) is an N-acetylalanine. A Citrulline modification is found at Arg-59. Ser-77 is subject to Phosphoserine. A Citrulline modification is found at Arg-140. Position 191 is an N6-acetyllysine (Lys-191).

The protein belongs to the universal ribosomal protein uL13 family. Component of the 60S ribosome. Component of the GAIT complex. Interacts with EIF4G1. Phosphorylation at Ser-77 upon interferon-gamma treatment in macrophages involves a DAPK1-DAPK3 kinase cascade and is causing release from the ribosome, association with the GAIT complex and subsequent involvement in transcript-selective translation inhibition. In terms of processing, citrullinated by PADI4.

The protein localises to the cytoplasm. Functionally, associated with ribosomes but is not required for canonical ribosome function and has extra-ribosomal functions. Component of the GAIT (gamma interferon-activated inhibitor of translation) complex which mediates interferon-gamma-induced transcript-selective translation inhibition in inflammation processes. Upon interferon-gamma activation and subsequent phosphorylation dissociates from the ribosome and assembles into the GAIT complex which binds to stem loop-containing GAIT elements in the 3'-UTR of diverse inflammatory mRNAs (such as ceruplasmin) and suppresses their translation. In the GAIT complex interacts with m7G cap-bound eIF4G at or near the eIF3-binding site and blocks the recruitment of the 43S ribosomal complex. Involved in methylation of rRNA. The polypeptide is Large ribosomal subunit protein uL13 (Rpl13a) (Rattus norvegicus (Rat)).